The primary structure comprises 601 residues: ATP-dependent lipid A-core flippase (601 aa).

The region spanning 28-328 (LLSVVGLIVY…LTRVNAEFQR (301 aa)) is the ABC transmembrane type-1 domain. 6 helical membrane passes run 32–52 (VGLI…GPFI), 81–101 (VLLM…FANF), 160–180 (ALIS…LMFY), 183–203 (WKLS…ITIV), 267–287 (AVSQ…VLYA), and 296–316 (DLTA…LQPI). The 238-residue stretch at 360 to 597 (LRFDNVSFSY…GGMYAKLYQM (238 aa)) folds into the ABC transporter domain. 394–401 (GRSGSGKS) provides a ligand contact to ATP.

Belongs to the ABC transporter superfamily. Lipid exporter (TC 3.A.1.106) family. Homodimer.

The protein localises to the cell inner membrane. It carries out the reaction ATP + H2O + lipid A-core oligosaccharideSide 1 = ADP + phosphate + lipid A-core oligosaccharideSide 2.. Its function is as follows. Involved in lipopolysaccharide (LPS) biosynthesis. Translocates lipid A-core from the inner to the outer leaflet of the inner membrane. Transmembrane domains (TMD) form a pore in the inner membrane and the ATP-binding domain (NBD) is responsible for energy generation. The protein is ATP-dependent lipid A-core flippase of Shewanella oneidensis (strain ATCC 700550 / JCM 31522 / CIP 106686 / LMG 19005 / NCIMB 14063 / MR-1).